The sequence spans 588 residues: MRKEAIHHRSTDNFAYAYDSETLHLRLQTKKNDVDHVELLFGDPYEWHDGAWQFQTMPMRKTGSDGLFDYWLAEVKPPYRRLRYGFVLRAGGEKLVYTEKGFYHEAPSDDTAYYFCFPFLHRVDLFQAPDWVKDTVWYQIFPERFANGNPAISPKGARPWGSEDPTPTSFFGGDLQGIIDHLDYLADLGITGIYLTPIFRAPSNHKYDTADYFEIDPHFGDKETLKTLVKRCHEKGIRVMLDAVFNHCGYEFGPFQDVLKNGAASRYKDWFHIREFPLQTEPRPNYDTFAFVPQMPKLNTAHPEVKRYLLDVATYWIREFDIDGWRLDVANEIDHQFWREFRQAVKALKPDVYILGEIWHDAMPWLRGDQFDAVMNYPLADAALRFFAKEDMSASEFADRLMHVLHSYPKQVNEAAFNLLGSHDTPRLLTVCGGDVRKVKLLFLFQLTFTGSPCIYYGDEIGMTGGNDPECRKCMVWDPEKQNKELYEHVKQLIALRKQYRALRRGDVAFLAADDEVNHLVYAKTDGNETVMIIINRSNEAAEIPMPIDARGKWLVNLLTGERFAAEAETLCVSLPPYGFVLYAVESW.

Positions 247 and 326 each coordinate substrate. The active-site Nucleophile is Asp-328. Glu-357 acts as the Proton donor in catalysis. Substrate is bound by residues 423–424 (HD), Asp-468, and Arg-472.

It belongs to the glycosyl hydrolase 13 family. As to quaternary structure, exists as a monomer or a homodimer in solution. Homodimer is more active and stable than the monomer.

It carries out the reaction cyclomaltodextrin + H2O = linear maltodextrin. Its activity is regulated as follows. No metal dependence, but Mn(2+) increases the activity with alpha-cyclodextrin as substrate. No effect on the activity with presence or absence of Ca(2+), Zn(2+), Tween-20 or EDTA. In terms of biological role, hydrolyzes alpha-, beta- and gamma-cyclodextrins with the highest activity with alpha-cyclodextrin (cyclomaltohexaose). Pullulan is the preferred substrate from linear substrates. Maltose is a major product of these reactions. Is also able to hydrolyze maltotriose and acarbose, and transglycosylate their hydrolytic products. Major reaction products of maltotriose and of acarbose are maltose and glucose, and glucose and pseudotrisaccharide, respectively. No activity with glucose or maltose as substrate. The chain is Cyclomaltodextrinase from Geobacillus thermopakistaniensis (strain MAS1).